The sequence spans 434 residues: Adenylosuccinate synthetase (434 aa).

Residues 11 to 17 and 39 to 41 contribute to the GTP site; these read GDEGKGK and GHT. Catalysis depends on Asp-12, which acts as the Proton acceptor. Mg(2+)-binding residues include Asp-12 and Gly-39. Residues 12–15, 37–40, Thr-134, Arg-148, Asn-230, Thr-245, and Arg-309 contribute to the IMP site; these read DEGK and NAGH. His-40 serves as the catalytic Proton donor. A substrate-binding site is contributed by 305 to 311; sequence VTTGRKR. GTP is bound by residues Arg-311, 337 to 339, and 419 to 421; these read KLD and GTG.

Belongs to the adenylosuccinate synthetase family. Homodimer. It depends on Mg(2+) as a cofactor.

Its subcellular location is the cytoplasm. It carries out the reaction IMP + L-aspartate + GTP = N(6)-(1,2-dicarboxyethyl)-AMP + GDP + phosphate + 2 H(+). Its pathway is purine metabolism; AMP biosynthesis via de novo pathway; AMP from IMP: step 1/2. Functionally, plays an important role in the de novo pathway and in the salvage pathway of purine nucleotide biosynthesis. Catalyzes the first committed step in the biosynthesis of AMP from IMP. This is Adenylosuccinate synthetase from Lachancea thermotolerans (strain ATCC 56472 / CBS 6340 / NRRL Y-8284) (Yeast).